Consider the following 167-residue polypeptide: Ribosome maturation factor RimM (167 aa).

One can recognise a PRC barrel domain in the interval 94-165 (ENEYYYSDII…KIIITPMEGL (72 aa)).

This sequence belongs to the RimM family. In terms of assembly, binds ribosomal protein uS19.

It is found in the cytoplasm. In terms of biological role, an accessory protein needed during the final step in the assembly of 30S ribosomal subunit, possibly for assembly of the head region. Essential for efficient processing of 16S rRNA. May be needed both before and after RbfA during the maturation of 16S rRNA. It has affinity for free ribosomal 30S subunits but not for 70S ribosomes. This Staphylococcus aureus (strain bovine RF122 / ET3-1) protein is Ribosome maturation factor RimM.